The sequence spans 424 residues: Adenylosuccinate synthetase (424 aa).

Residues 12–18 and 40–42 contribute to the GTP site; these read GDEGKGK and GHT. The Proton acceptor role is filled by aspartate 13. Mg(2+) contacts are provided by aspartate 13 and glycine 40. Residues 13-16, 38-41, threonine 130, arginine 144, asparagine 220, threonine 235, and arginine 299 each bind IMP; these read DEGK and NAGH. Histidine 41 serves as the catalytic Proton donor. Position 295 to 301 (295 to 301) interacts with substrate; sequence VTTGRRR. Residues arginine 301, 327 to 329, and 412 to 414 each bind GTP; these read KLD and GTG.

This sequence belongs to the adenylosuccinate synthetase family. As to quaternary structure, homodimer. Requires Mg(2+) as cofactor.

It localises to the cytoplasm. The enzyme catalyses IMP + L-aspartate + GTP = N(6)-(1,2-dicarboxyethyl)-AMP + GDP + phosphate + 2 H(+). It functions in the pathway purine metabolism; AMP biosynthesis via de novo pathway; AMP from IMP: step 1/2. Its function is as follows. Plays an important role in the de novo pathway and in the salvage pathway of purine nucleotide biosynthesis. Catalyzes the first committed step in the biosynthesis of AMP from IMP. The chain is Adenylosuccinate synthetase from Aspergillus clavatus (strain ATCC 1007 / CBS 513.65 / DSM 816 / NCTC 3887 / NRRL 1 / QM 1276 / 107).